The chain runs to 226 residues: TPD1 protein homolog 1A (226 aa).

A signal peptide spans Met1–Ala35.

In terms of assembly, interacts with MSP1. As to expression, expressed in roots, and anthers and ovules during meiosis.

In terms of biological role, involved in cell specification during anther development. Required for the differentiation of primary parietal cells into secondary parietal cells in anthers. May serve as an extracellular ligand for the MSP1 receptor kinase to limit sporocyte number in ovules. This Oryza sativa subsp. japonica (Rice) protein is TPD1 protein homolog 1A.